The primary structure comprises 1866 residues: Protein NLRC5 (1866 aa).

The disordered stretch occupies residues 105–135 (GAEGKSQPESQLHHGLKRPHQSCGSSPRRKQ). Residues 222 to 539 (RVTVLLGKAG…PKVNKDTLTQ (318 aa)) enclose the NACHT domain. Residue 228 to 235 (GKAGMGKT) coordinates ATP. 26 LRR repeats span residues 599–622 (LKKL…VDET), 713–737 (MGRL…LVKA), 741–765 (CPQL…IVEV), 769–792 (LPRL…CLAR), 869–892 (GPHL…LMAE), 897–921 (LHIA…VLRA), 930–953 (ELHI…EQKG), 976–1000 (SRRM…ALGG), 1004–1026 (LGHL…RLAQ), 1031–1058 (LGAL…CFST), 1138–1161 (LELQ…CLPQ), 1162–1184 (LPQL…FLLA), 1242–1265 (CKDL…CLLE), 1272–1294 (ISGL…LLET), 1462–1488 (CARL…LLQS), 1493–1516 (LSEL…HLAS), 1521–1544 (CHHL…ALMR), 1554–1577 (RLDL…LSQM), 1578–1600 (TCLQ…HLSE), 1605–1628 (ATSL…HLAT), 1633–1656 (LPEL…QLAE), 1661–1684 (CRRL…GLAQ), 1687–1714 (PQHL…ALDG), 1715–1739 (SPHL…CMEL), 1741–1762 (LLRQ…LLTS), and 1795–1818 (MGRL…LLAE).

Belongs to the NLRP family. In terms of assembly, interacts with CHUK and IKBKB; prevents CHUK and IKBKB phosphorylation and inhibits their kinase activity. Interacts with RIGI and IFIH1; blocks the interaction of MAVS to RIGI. Expressed in spleen, thymus, lung, brain, tonsil, heart and prostate.

The protein resides in the cytoplasm. In terms of biological role, probable regulator of the NF-kappa-B and type I interferon signaling pathways. May also regulate the type II interferon signaling pathway. Plays a role in homeostatic control of innate immunity and in antiviral defense mechanisms. The chain is Protein NLRC5 (NLRC5) from Homo sapiens (Human).